Here is a 1206-residue protein sequence, read N- to C-terminus: Phosphoglucan, water dikinase, chloroplastic (1206 aa).

Disordered stretches follow at residues 1–20 and 52–71; these read MTSL…PRRG and RSAA…DSSK. The transit peptide at 1-56 directs the protein to the chloroplast; it reads MTSLRPLETSLSIGGRPRRGLVLPPPGVGAGVLLRRGAMALPGRRGFACRGRSAAS. A CBM20 domain is found at 67–168; the sequence is RDSSKQPLVH…KFDIVCHWNR (102 aa). His-776 (tele-phosphohistidine intermediate) is an active-site residue.

The protein belongs to the PEP-utilizing enzyme family. Homodimer. The cofactor is Mg(2+).

The protein resides in the plastid. It localises to the chloroplast. The catalysed reaction is [(1-&gt;4)-6-phospho-alpha-D-glucosyl](n) + n ATP + n H2O = [(1-&gt;4)-3,6-bisphospho-alpha-D-glucosyl](n) + n AMP + n phosphate + 2n H(+). Functionally, mediates the incorporation of phosphate into starch-like phospho-alpha-glucan, mostly at the C-3 position of glucose units. May be required for starch degradation, suggesting that the phosphate content of starch regulates its degradability. The chain is Phosphoglucan, water dikinase, chloroplastic (GWD3) from Oryza sativa subsp. japonica (Rice).